The sequence spans 279 residues: MATH domain and coiled-coil domain-containing protein At1g31390 (279 aa).

An MATH domain is found at 6-134 (EKKITWTIKN…NGDVKIVVEV (129 aa)). A coiled-coil region spans residues 235–271 (KLDWLEKKLKEVCEARVQEIDEEWKDLTDLKENWSSD).

The chain is MATH domain and coiled-coil domain-containing protein At1g31390 from Arabidopsis thaliana (Mouse-ear cress).